A 491-amino-acid chain; its full sequence is Serine/threonine-protein phosphatase 2A regulatory subunit B'' subunit delta (491 aa).

Positions 331–366 constitute an EF-hand domain; the sequence is TTPTSTEYWFRCMDLDGDGALSMFELEFFYEEQAQR. Positions 344, 346, 348, and 355 each coordinate Ca(2+). 2 stretches are compositionally biased toward acidic residues: residues 460-473 and 481-491; these read AMAE…EGSD and ADEDCDDLEPL. Residues 460-491 form a disordered region; it reads AMAEDDDDHDEGSDPIDLYGLADEDCDDLEPL.

As to quaternary structure, PP2A consists of a common heterodimeric core enzyme, composed of a 36 kDa catalytic subunit (subunit C) and a 65 kDa constant regulatory subunit (PR65 or subunit A), that associates with a variety of regulatory subunits. Proteins that associate with the core dimer include three families of regulatory subunits B (the R2/B/PR55/B55, R3/B''/PR72/PR130/PR59 and R5/B'/B56 families), the 48 kDa variable regulatory subunit, viral proteins, and cell signaling molecules. In terms of tissue distribution, expressed in testis, kidney, liver, lung, spleen, brain and heart.

Its function is as follows. The B regulatory subunit might modulate substrate selectivity and catalytic activity, and might also direct the localization of the catalytic enzyme to a particular subcellular compartment. Interacts with retinoblastoma-related protein p107 (in vivo). May target PP2A core dimer to p107 resulting in dephosphorylation of p107. This chain is Serine/threonine-protein phosphatase 2A regulatory subunit B'' subunit delta (Ppp2r3d), found in Mus musculus (Mouse).